We begin with the raw amino-acid sequence, 136 residues long: Group 1 truncated hemoglobin GlbN (136 aa).

Position 81 (histidine 81) interacts with heme.

It belongs to the truncated hemoglobin family. Group I subfamily. Homodimer. Heme serves as cofactor.

Its function is as follows. Binds oxygen cooperatively with very high affinity (P(50) = 0.013 mmHg at 20 degrees Celsius) because of a fast combination (25 microM(-1)sec(-1)) and a slow dissociation (0.2 sec(-1)) rate. The protein is Group 1 truncated hemoglobin GlbN (glbN) of Mycobacterium bovis (strain ATCC BAA-935 / AF2122/97).